A 185-amino-acid polypeptide reads, in one-letter code: ATP synthase subunit delta (185 aa).

It belongs to the ATPase delta chain family. In terms of assembly, F-type ATPases have 2 components, F(1) - the catalytic core - and F(0) - the membrane proton channel. F(1) has five subunits: alpha(3), beta(3), gamma(1), delta(1), epsilon(1). F(0) has three main subunits: a(1), b(2) and c(10-14). The alpha and beta chains form an alternating ring which encloses part of the gamma chain. F(1) is attached to F(0) by a central stalk formed by the gamma and epsilon chains, while a peripheral stalk is formed by the delta and b chains.

The protein localises to the cell inner membrane. Its function is as follows. F(1)F(0) ATP synthase produces ATP from ADP in the presence of a proton or sodium gradient. F-type ATPases consist of two structural domains, F(1) containing the extramembraneous catalytic core and F(0) containing the membrane proton channel, linked together by a central stalk and a peripheral stalk. During catalysis, ATP synthesis in the catalytic domain of F(1) is coupled via a rotary mechanism of the central stalk subunits to proton translocation. This protein is part of the stalk that links CF(0) to CF(1). It either transmits conformational changes from CF(0) to CF(1) or is implicated in proton conduction. This chain is ATP synthase subunit delta, found in Pelagibacter ubique (strain HTCC1062).